The following is a 573-amino-acid chain: MDGVCKSPQRLLFVLVSCFGLVQSYKNGLVSSVCGSMMPNHGANAQISSPPFTVTADKTTFKEGDQITVTLNSQTGYQFEGFMLQARQVGSSSSIGTFSVTASNMQLLTCDGVSARSVSHTSNSKKSSIQAKWTAPTSGQLGNIQFSVTFVKSDDTFWVGVKSSAVVYNGAGTTGTSTTPATVAPTVASIPGCGTTKVCFSQPNNCDPTTSTGCYFVAVQASSDQSEMRIEMFGPADGYVAIGFSDDQQMGNDDVYICGKDNNGNLQVQHAFNSGRSRPAILSLGNVTDILTAVTNGNINCSFISRNTISTASRAATTNEYYLMIAAGSSSQGNIQFHTNKYVTSTKVNLLNPSVVITSEEEFPPMVKAHGCLMLISWMATGSIGMIIARYLKGVAKGQGCFGKDFWFVAHVSLMTLSIIATAIAFIIVFVSAGDWAGGAHPVLGCLVMILSLIQPIVAAFRCEPQHERRFVFNWAHSCNAFAIKCLAVAAIFTGLALFEEYDSDGWMLKVMGGYLAWEALMYILQDLNLRAKKKDSQLCSCEPMRPETILLFLFIIGNLAFLIALLVGIGSA.

Residues 4–24 traverse the membrane as a helical segment; that stretch reads VCKSPQRLLFVLVSCFGLVQS. Positions 15-181 constitute a Reelin domain; the sequence is LVSCFGLVQS…GTTGTSTTPA (167 aa). Residues 213–328 enclose the DOMON domain; that stretch reads GCYFVAVQAS…NEYYLMIAAG (116 aa). N-linked (GlcNAc...) asparagine glycans are attached at residues Asn286 and Asn300. The Cytochrome b561 domain occupies 332–532; it reads QGNIQFHTNK…YILQDLNLRA (201 aa). A helical membrane pass occupies residues 369-389; sequence AHGCLMLISWMATGSIGMIIA. Heme b contacts are provided by His370 and His411. The next 2 membrane-spanning stretches (helical) occupy residues 414 to 434 and 441 to 461; these read LMTLSIIATAIAFIIVFVSAG and HPVLGCLVMILSLIQPIVAAF. Residues His441 and His477 each coordinate heme b. Helical transmembrane passes span 479–499, 506–526, and 550–570; these read CNAFAIKCLAVAAIFTGLALF, GWMLKVMGGYLAWEALMYILQ, and ILLFLFIIGNLAFLIALLVGI.

It belongs to the FRRS1 family. It depends on heme b as a cofactor.

Its subcellular location is the membrane. In terms of biological role, putative ferric-chelate reductases reduce Fe(3+) to Fe(2+) before its transport from the endosome to the cytoplasm. The protein is Putative ferric-chelate reductase 1 (frrs1) of Danio rerio (Zebrafish).